A 76-amino-acid chain; its full sequence is ATP synthase subunit 9, mitochondrial (76 aa).

2 consecutive transmembrane segments (helical) span residues Ile10–Phe30 and Ile52–Leu72.

It belongs to the ATPase C chain family. As to quaternary structure, F-type ATPases have 2 components, CF(1) - the catalytic core - and CF(0) - the membrane proton channel. CF(1) has five subunits: alpha(3), beta(3), gamma(1), delta(1), epsilon(1). CF(0) has three main subunits: a, b and c.

The protein resides in the mitochondrion membrane. Mitochondrial membrane ATP synthase (F(1)F(0) ATP synthase or Complex V) produces ATP from ADP in the presence of a proton gradient across the membrane which is generated by electron transport complexes of the respiratory chain. F-type ATPases consist of two structural domains, F(1) - containing the extramembraneous catalytic core and F(0) - containing the membrane proton channel, linked together by a central stalk and a peripheral stalk. During catalysis, ATP synthesis in the catalytic domain of F(1) is coupled via a rotary mechanism of the central stalk subunits to proton translocation. Part of the complex F(0) domain. A homomeric c-ring of probably 10 subunits is part of the complex rotary element. In Kluyveromyces lactis (strain ATCC 8585 / CBS 2359 / DSM 70799 / NBRC 1267 / NRRL Y-1140 / WM37) (Yeast), this protein is ATP synthase subunit 9, mitochondrial (ATP9).